The following is a 544-amino-acid chain: Chaperonin GroEL 1 (544 aa).

Residues 30–33, K51, 87–91, G415, and D494 contribute to the ATP site; these read TLGP and DGTTT.

This sequence belongs to the chaperonin (HSP60) family. In terms of assembly, forms a cylinder of 14 subunits composed of two heptameric rings stacked back-to-back. Interacts with the co-chaperonin GroES.

The protein resides in the cytoplasm. It carries out the reaction ATP + H2O + a folded polypeptide = ADP + phosphate + an unfolded polypeptide.. Together with its co-chaperonin GroES, plays an essential role in assisting protein folding. The GroEL-GroES system forms a nano-cage that allows encapsulation of the non-native substrate proteins and provides a physical environment optimized to promote and accelerate protein folding. This chain is Chaperonin GroEL 1, found in Syntrophus aciditrophicus (strain SB).